The following is a 189-amino-acid chain: Interferon alpha-4 (189 aa).

An N-terminal signal peptide occupies residues 1-23 (MALSFSLLMAVLVLSYKSICSLG). 2 disulfide bridges follow: Cys-24–Cys-122 and Cys-52–Cys-162.

It belongs to the alpha/beta interferon family.

Its subcellular location is the secreted. Its function is as follows. Produced by macrophages, IFN-alpha have antiviral activities. Interferon stimulates the production of two enzymes: a protein kinase and an oligoadenylate synthetase. The polypeptide is Interferon alpha-4 (IFNA4) (Homo sapiens (Human)).